The chain runs to 288 residues: Protein FANTASTIC FOUR 3 (288 aa).

Residues 48-60 (HAEDTRNRNDDKA) show a composition bias toward basic and acidic residues. Disordered regions lie at residues 48 to 100 (HAED…YYVQ), 146 to 172 (ETTTETRTLKSRKRSVSPSDLPPPLTT), and 222 to 261 (NEFVENEEETIEPEETEEYEEEEEEEEDEDEDEVMGIENV). Low complexity predominate over residues 66–90 (SDSSGWSSLQSLSSGSSSSTKTTTS). The FAF domain maps to 165-217 (DLPPPLTTMRGFQCIQMRPHRENGRLVMTATNAPPRNGCFQADRSNGRLRLSI). Residues 223 to 256 (EFVENEEETIEPEETEEYEEEEEEEEDEDEDEVM) show a composition bias toward acidic residues.

Belongs to the fantastic four family. As to expression, expressed in the shoot apex, stamens, young leaves and young siliques, but not in old leaves. Detected in provascular and vascular tissue, but not in the vegetative meristem. In inflorescences, restricted to the vasculature and absent from young flowers, except from anthers.

Its function is as follows. Able to repress WUS when constitutively overexpressed, but have no effect on CLV3. This Arabidopsis thaliana (Mouse-ear cress) protein is Protein FANTASTIC FOUR 3 (FAF3).